The chain runs to 95 residues: Co-chaperonin GroES (95 aa).

The protein belongs to the GroES chaperonin family. As to quaternary structure, heptamer of 7 subunits arranged in a ring. Interacts with the chaperonin GroEL.

Its subcellular location is the cytoplasm. Functionally, together with the chaperonin GroEL, plays an essential role in assisting protein folding. The GroEL-GroES system forms a nano-cage that allows encapsulation of the non-native substrate proteins and provides a physical environment optimized to promote and accelerate protein folding. GroES binds to the apical surface of the GroEL ring, thereby capping the opening of the GroEL channel. The sequence is that of Co-chaperonin GroES from Pseudoalteromonas translucida (strain TAC 125).